A 327-amino-acid polypeptide reads, in one-letter code: tRNA(Ile)-lysidine synthase (327 aa).

Residue 32-37 (SGGQDS) participates in ATP binding.

This sequence belongs to the tRNA(Ile)-lysidine synthase family.

It is found in the cytoplasm. The enzyme catalyses cytidine(34) in tRNA(Ile2) + L-lysine + ATP = lysidine(34) in tRNA(Ile2) + AMP + diphosphate + H(+). In terms of biological role, ligates lysine onto the cytidine present at position 34 of the AUA codon-specific tRNA(Ile) that contains the anticodon CAU, in an ATP-dependent manner. Cytidine is converted to lysidine, thus changing the amino acid specificity of the tRNA from methionine to isoleucine. The sequence is that of tRNA(Ile)-lysidine synthase from Synechococcus sp. (strain JA-2-3B'a(2-13)) (Cyanobacteria bacterium Yellowstone B-Prime).